Consider the following 869-residue polypeptide: Leucine--tRNA ligase (869 aa).

Residues 42 to 52 carry the 'HIGH' region motif; the sequence is PYPSGNLHMGH. The 'KMSKS' region signature appears at 622–626; sequence KMSKS. Residue Lys-625 coordinates ATP.

This sequence belongs to the class-I aminoacyl-tRNA synthetase family.

It localises to the cytoplasm. It catalyses the reaction tRNA(Leu) + L-leucine + ATP = L-leucyl-tRNA(Leu) + AMP + diphosphate. The sequence is that of Leucine--tRNA ligase from Synechocystis sp. (strain ATCC 27184 / PCC 6803 / Kazusa).